A 199-amino-acid polypeptide reads, in one-letter code: MPNILPGPLRGFGVTFGTMFRRVTTEQYPDEKKPTMPRYHGRHVLNRHPDGLEKCIGCELCAWACPADAIYVEGADNTEEERYSPGERYGRVYQINYLRCIFCGYCIEACPTRALTMSNEYELADDNRADLIYTKEQLLAPLAPGMEPPPHPMRLGDTKDYYRGTPAAHMLSGEDDAASETTLDRSDDHSATYEEAERP.

2 consecutive 4Fe-4S ferredoxin-type domains span residues 45-75 (LNRHPDGLEKCIGCELCAWACPADAIYVEGA) and 91-120 (RVYQINYLRCIFCGYCIEACPTRALTMSNE). Residues C55, C58, C61, C65, C100, C103, C106, and C110 each coordinate [4Fe-4S] cluster. The segment at 164-199 (GTPAAHMLSGEDDAASETTLDRSDDHSATYEEAERP) is disordered. Residues 182–199 (TLDRSDDHSATYEEAERP) show a composition bias toward basic and acidic residues.

Belongs to the complex I 23 kDa subunit family. In terms of assembly, NDH-1 is composed of 14 different subunits. Subunits NuoA, H, J, K, L, M, N constitute the membrane sector of the complex. The cofactor is [4Fe-4S] cluster.

The protein localises to the cell membrane. It carries out the reaction a quinone + NADH + 5 H(+)(in) = a quinol + NAD(+) + 4 H(+)(out). In terms of biological role, NDH-1 shuttles electrons from NADH, via FMN and iron-sulfur (Fe-S) centers, to quinones in the respiratory chain. The immediate electron acceptor for the enzyme in this species is believed to be ubiquinone. Couples the redox reaction to proton translocation (for every two electrons transferred, four hydrogen ions are translocated across the cytoplasmic membrane), and thus conserves the redox energy in a proton gradient. The sequence is that of NADH-quinone oxidoreductase subunit I from Acidothermus cellulolyticus (strain ATCC 43068 / DSM 8971 / 11B).